A 363-amino-acid chain; its full sequence is Adenosine deaminase (363 aa).

Positions 42 and 44 each coordinate Zn(2+). A purine D-ribonucleoside-binding positions include 44–46 (HLD), D172, and G201. Positions 170 to 184 (IGDTGHEAANIKASA) are gating helix loop; regulates binding affinity for substrates and thus substrate selectivity. H226 lines the Zn(2+) pocket. A purine D-ribonucleoside is bound by residues E229, H253, and D310. Zn(2+) is bound at residue D310.

It belongs to the metallo-dependent hydrolases superfamily. Adenosine and AMP deaminases family. It depends on Zn(2+) as a cofactor.

It catalyses the reaction adenosine + H2O + H(+) = inosine + NH4(+). The catalysed reaction is S-methyl-5'-thioadenosine + H2O + H(+) = S-methyl-5'-thioinosine + NH4(+). The protein operates within purine metabolism; purine nucleoside salvage. With respect to regulation, inhibited by coformycin and methylthiocoformycin (MT-coformycin). In terms of biological role, catalyzes the hydrolytic deamination of adenosine to produce inosine. Unlike mammalian adenosine deaminases, also catalyzes the deamination of 5'-methylthioadenosine (MTA), a by-product of polyamine biosynthesis, to produce 5'-methylthioinosine (MTI). Plays an essential role in the purine salvage pathway which allows the parasite to use host cell purines for the synthesis of nucleic acids. The polypeptide is Adenosine deaminase (Plasmodium vivax (strain Salvador I)).